The sequence spans 590 residues: Aspartate--tRNA ligase (590 aa).

Position 180 (glutamate 180) interacts with L-aspartate. Residues 204–207 (QLFK) form an aspartate region. Arginine 226 serves as a coordination point for L-aspartate. ATP contacts are provided by residues 226 to 228 (RDE) and glutamine 235. Histidine 454 is an L-aspartate binding site. Glutamate 488 is an ATP binding site. Arginine 495 contacts L-aspartate. Residue 540–543 (GFDR) participates in ATP binding.

The protein belongs to the class-II aminoacyl-tRNA synthetase family. Type 1 subfamily. As to quaternary structure, homodimer.

Its subcellular location is the cytoplasm. The enzyme catalyses tRNA(Asp) + L-aspartate + ATP = L-aspartyl-tRNA(Asp) + AMP + diphosphate. Its function is as follows. Catalyzes the attachment of L-aspartate to tRNA(Asp) in a two-step reaction: L-aspartate is first activated by ATP to form Asp-AMP and then transferred to the acceptor end of tRNA(Asp). This is Aspartate--tRNA ligase from Clostridium kluyveri (strain NBRC 12016).